A 391-amino-acid chain; its full sequence is Large envelope protein (391 aa).

Met-1 carries the N-acetylmethionine modification. Gly-2 carries the N-myristoyl glycine; by host lipid modification. The segment at 2–108 is pre-S1; it reads GLNQSTFNPL…PPLRDTHPQA (107 aa). The segment at 2–163 is pre-S; the sequence is GLNQSTFNPL…FSTTGVPVST (162 aa). Residues 2 to 170 are Virion surface; in external conformation-facing; that stretch reads GLNQSTFNPL…VSTMDITSSG (169 aa). Over 2–242 the chain is Intravirion; in internal conformation; sequence GLNQSTFNPL…PGYRWMCLRR (241 aa). The disordered stretch occupies residues 73-107; sequence LSVTVPDTPPPPSTNRDKGRKPTPATPPLRDTHPQ. The interval 109–163 is pre-S2; sequence MTWNTSSFQSYLQNPKVRGLYFPAGGSTSSIVNPVPTTASTTSSSFSTTGVPVST. Residues 171–191 form a helical membrane-spanning segment; sequence FLGPLLALQAVFFLLTKILTM. Topologically, residues 192–242 are intravirion; in external conformation; the sequence is PQSLDSLWTSLNFLGGTPACPGLNSQSPTSSHSPTCCPPTCPGYRWMCLRR. The chain crosses the membrane as a helical span at residues 243–263; that stretch reads SIIFLFILLLCLIFLLVLLDY. The Virion surface portion of the chain corresponds to 264 to 339; sequence QGMLPVCPLL…WALARFSWLN (76 aa). The N-linked (GlcNAc...) asparagine; by host glycan is linked to Asn-311. The helical transmembrane segment at 340 to 360 threads the bilayer; the sequence is SLLPFVQWFAGLSPTVWLLVI. The Intravirion segment spans residues 361-366; it reads WMMWFW. Residues 367 to 389 form a helical membrane-spanning segment; that stretch reads GPSLFSILSPFLPLLPLFFWLWA. Topologically, residues 390–391 are virion surface; that stretch reads YI.

The protein belongs to the orthohepadnavirus major surface antigen family. In its internal form (Li-HBsAg), interacts with the capsid protein and with the isoform S. Interacts with host chaperone CANX. In terms of assembly, associates with host chaperone CANX through its pre-S2 N glycan; this association may be essential for isoform M proper secretion. As to quaternary structure, interacts with isoform L. Interacts with the antigens of satellite virus HDV (HDVAgs); this interaction is required for encapsidation of HDV genomic RNA. Post-translationally, isoform M is N-terminally acetylated by host at a ratio of 90%, and N-glycosylated by host at the pre-S2 region. Myristoylated.

It localises to the virion membrane. Its function is as follows. The large envelope protein exists in two topological conformations, one which is termed 'external' or Le-HBsAg and the other 'internal' or Li-HBsAg. In its external conformation the protein attaches the virus to cell receptors and thereby initiating infection. This interaction determines the species specificity and liver tropism. This attachment induces virion internalization predominantly through caveolin-mediated endocytosis. The large envelope protein also assures fusion between virion membrane and endosomal membrane. In its internal conformation the protein plays a role in virion morphogenesis and mediates the contact with the nucleocapsid like a matrix protein. In terms of biological role, the middle envelope protein plays an important role in the budding of the virion. It is involved in the induction of budding in a nucleocapsid independent way. In this process the majority of envelope proteins bud to form subviral lipoprotein particles of 22 nm of diameter that do not contain a nucleocapsid. The polypeptide is Large envelope protein (Woolly monkey hepatitis B virus (isolate Louisville) (WMHBV)).